Here is a 345-residue protein sequence, read N- to C-terminus: UPF0324 membrane protein CTC_01844 (345 aa).

10 helical membrane-spanning segments follow: residues 7–24 (YSVG…SGFI), 28–50 (IPYR…NPIV), 70–87 (LAII…VLEV), 91–113 (SLIV…GKLF), 120–142 (SGLI…SPVI), 152–174 (AISA…GKYF), 181–203 (YGLW…YAFS), 209–231 (FSVI…FSYI), 261–283 (IFPW…IIPN), and 316–338 (SGFA…SFLV).

This sequence belongs to the UPF0324 family.

It is found in the cell membrane. This chain is UPF0324 membrane protein CTC_01844, found in Clostridium tetani (strain Massachusetts / E88).